The primary structure comprises 530 residues: UDP-glucuronosyltransferase 2B17 (530 aa).

The N-terminal stretch at 1-23 (MPGKWISALLLLQISCCFRSVKC) is a signal peptide. 2 N-linked (GlcNAc...) asparagine glycosylation sites follow: Asn-316 and Asn-483. The helical transmembrane segment at 494-510 (VIGFLLSCVATTIVLSV) threads the bilayer.

Belongs to the UDP-glycosyltransferase family.

The protein resides in the endoplasmic reticulum membrane. The catalysed reaction is glucuronate acceptor + UDP-alpha-D-glucuronate = acceptor beta-D-glucuronoside + UDP + H(+). The enzyme catalyses 17alpha-estradiol + UDP-alpha-D-glucuronate = 17alpha-estradiol 3-O-(beta-D-glucuronate) + UDP + H(+). It carries out the reaction 17alpha-estradiol + UDP-alpha-D-glucuronate = 17alpha-estradiol 17-O-(beta-D-glucuronate) + UDP + H(+). It catalyses the reaction 17beta-estradiol + UDP-alpha-D-glucuronate = 17beta-estradiol 17-O-(beta-D-glucuronate) + UDP + H(+). The catalysed reaction is 17beta-hydroxy-5alpha-androstan-3-one + UDP-alpha-D-glucuronate = 5alpha-dihydrotestosterone 17-O-(beta-D-glucuronate) + UDP + H(+). The enzyme catalyses testosterone + UDP-alpha-D-glucuronate = testosterone 17-O-(beta-D-glucuronate) + UDP + H(+). In terms of biological role, UDP-glucuronosyltransferase (UGT) that catalyzes phase II biotransformation reactions in which lipophilic substrates are conjugated with glucuronic acid to increase the metabolite's water solubility, thereby facilitating excretion into either the urine or bile. Catalyzes the glucuronidation of endogenous steroid hormones such as androgens (epitestosterone, androsterone) and estrogens (estradiol, epiestradiol). This is UDP-glucuronosyltransferase 2B17 from Mus musculus (Mouse).